A 208-amino-acid chain; its full sequence is Ciliary-associated calcium-binding coiled-coil protein 1 (208 aa).

As to expression, testis-specific. Expressed in spermatocytes and round spermatids (at protein level).

The protein localises to the cytoplasm. It is found in the cytoskeleton. It localises to the microtubule organizing center. Its subcellular location is the centrosome. The protein resides in the cell projection. The protein localises to the cilium. It is found in the flagellum. Calcium-binding protein. May be involved in the control of sperm flagellar movement. The protein is Ciliary-associated calcium-binding coiled-coil protein 1 of Mus musculus (Mouse).